Reading from the N-terminus, the 162-residue chain is MATDVTFDTSMGSFTVELYNSHAPKTCKNFATLAQRGYYNNVIFHRIIPNFMVQTGDPTGTGRGGSSIYGEKFEDEIRSDLKHTGAGILSMANSGPNTNGSQFFITLAPTPWLDGKHTIFGRVKSGMRIIQRMGLVKTNNEDRPLDEVKILRAKVVEAGSEE.

The region spanning 1–155 is the PPIase cyclophilin-type domain; that stretch reads MATDVTFDTS…DEVKILRAKV (155 aa).

Belongs to the cyclophilin-type PPIase family. PPIL1 subfamily.

It carries out the reaction [protein]-peptidylproline (omega=180) = [protein]-peptidylproline (omega=0). Functionally, PPIases accelerate the folding of proteins. It catalyzes the cis-trans isomerization of proline imidic peptide bonds in oligopeptides. The chain is Peptidyl-prolyl cis-trans isomerase-like 1 (cyp1) from Emericella nidulans (strain FGSC A4 / ATCC 38163 / CBS 112.46 / NRRL 194 / M139) (Aspergillus nidulans).